The primary structure comprises 276 residues: Large ribosomal subunit protein uL2 (276 aa).

The tract at residues 223 to 276 (GVAMNPVDHPHGGGEGRGKGHHPTSPWGLPTKGYKTRRGKRPSDKFIVRRRNEV) is disordered. Composition is skewed to basic and acidic residues over residues 230–240 (DHPHGGGEGRG) and 263–276 (RPSD…RNEV).

This sequence belongs to the universal ribosomal protein uL2 family. In terms of assembly, part of the 50S ribosomal subunit. Forms a bridge to the 30S subunit in the 70S ribosome.

Its function is as follows. One of the primary rRNA binding proteins. Required for association of the 30S and 50S subunits to form the 70S ribosome, for tRNA binding and peptide bond formation. It has been suggested to have peptidyltransferase activity; this is somewhat controversial. Makes several contacts with the 16S rRNA in the 70S ribosome. This is Large ribosomal subunit protein uL2 from Thermotoga neapolitana (strain ATCC 49049 / DSM 4359 / NBRC 107923 / NS-E).